A 132-amino-acid polypeptide reads, in one-letter code: Fatty acid-binding protein type 2 (132 aa).

The residue at position 2 (alanine 2) is an N-acetylalanine.

This sequence belongs to the calycin superfamily. Fatty-acid binding protein (FABP) family.

The sequence is that of Fatty acid-binding protein type 2 from Fasciola hepatica (Liver fluke).